A 253-amino-acid chain; its full sequence is Sulfate transporter CysZ (253 aa).

4 helical membrane passes run 31 to 51 (FVILPLLVNILLMGGAFWWLF), 75 to 95 (LLWPLAVISVLLVFGYFFSTI), 151 to 171 (IVLLILYFIPGIGQTVAPVLW), and 222 to 242 (IPLLNLFIMPVAVCGATAMWV).

It belongs to the CysZ family.

The protein localises to the cell inner membrane. High affinity, high specificity proton-dependent sulfate transporter, which mediates sulfate uptake. Provides the sulfur source for the cysteine synthesis pathway. This is Sulfate transporter CysZ from Shigella dysenteriae serotype 1 (strain Sd197).